A 324-amino-acid polypeptide reads, in one-letter code: Homoserine kinase (324 aa).

87 to 97 (PVARGMGSSAA) is an ATP binding site.

The protein belongs to the GHMP kinase family. Homoserine kinase subfamily.

The protein localises to the cytoplasm. It catalyses the reaction L-homoserine + ATP = O-phospho-L-homoserine + ADP + H(+). It participates in amino-acid biosynthesis; L-threonine biosynthesis; L-threonine from L-aspartate: step 4/5. In terms of biological role, catalyzes the ATP-dependent phosphorylation of L-homoserine to L-homoserine phosphate. In Symbiobacterium thermophilum (strain DSM 24528 / JCM 14929 / IAM 14863 / T), this protein is Homoserine kinase.